The chain runs to 673 residues: Xyloglucan glycosyltransferase 4 (673 aa).

Transmembrane regions (helical) follow at residues 90–110 (FIKA…VAHF) and 144–164 (IAPL…IQSL). D238 is an active-site residue. Residues D297 and D299 each coordinate substrate. D391 is an active-site residue. The next 2 helical transmembrane spans lie at 469–489 (LILP…TMFI) and 494–514 (LPLW…ILPS). S581 is modified (phosphoserine). 2 consecutive transmembrane segments (helical) span residues 623–643 (VFKK…RSFL) and 648–668 (LHFY…LDLI).

It belongs to the glycosyltransferase 2 family. Plant cellulose synthase-like C subfamily. Homodimer. Interacts with XXT5. Interacts with FUT1, MUR3 and XLT2. In terms of tissue distribution, expressed in seedlings, roots, leaves, stems, flowers and seeds.

It localises to the golgi apparatus membrane. Functionally, beta-1,4-glucan synthase rather involved in the synthesis of the xyloglucan backbone than cellulose. Seems to work simultaneously with xyloglucan 6-xylosyltransferase. Xyloglucan is a noncellulosic polysaccharides of plant cell wall and consists of a glucan backbone substituted by xylose, galactose and fucose. Associates with other xyloglucan-synthesizing enzymes to form multiprotein complexes for xyloglucan synthesis in the Golgi. The protein is Xyloglucan glycosyltransferase 4 of Arabidopsis thaliana (Mouse-ear cress).